Consider the following 253-residue polypeptide: Protein C1orf43 (253 aa).

Residues 11–31 form a helical membrane-spanning segment; sequence VNVVLVMAYGSLVFVLLFIFV.

Its subcellular location is the membrane. The protein resides in the golgi apparatus. It localises to the mitochondrion. Its function is as follows. General regulator of phagocytosis. Required to uptake Gram negative bacterium by macrophages. In Homo sapiens (Human), this protein is Protein C1orf43 (C1orf43).